Reading from the N-terminus, the 269-residue chain is 5'-nucleotidase SurE (269 aa).

A divalent metal cation-binding residues include aspartate 11, aspartate 12, serine 43, and asparagine 101.

It belongs to the SurE nucleotidase family. Requires a divalent metal cation as cofactor.

It localises to the cytoplasm. The catalysed reaction is a ribonucleoside 5'-phosphate + H2O = a ribonucleoside + phosphate. Nucleotidase that shows phosphatase activity on nucleoside 5'-monophosphates. The sequence is that of 5'-nucleotidase SurE from Prochlorococcus marinus (strain MIT 9211).